The chain runs to 510 residues: Anaerobic nitric oxide reductase transcription regulator NorR (510 aa).

Residues 188-417 (IIGNSQGMRT…LEHVIKRAAV (230 aa)) enclose the Sigma-54 factor interaction domain. Residues 216 to 223 (GETGVGKE) and 279 to 288 (ADGGTLFLDE) contribute to the ATP site. The H-T-H motif DNA-binding region spans 486-505 (WAATARQLELDSGNLHRLAK).

It functions in the pathway nitrogen metabolism; nitric oxide reduction. Its function is as follows. Required for the expression of anaerobic nitric oxide (NO) reductase, acts as a transcriptional activator for at least the norVW operon. Activation also requires sigma-54. This Vibrio vulnificus (strain CMCP6) protein is Anaerobic nitric oxide reductase transcription regulator NorR.